Reading from the N-terminus, the 69-residue chain is UPF0337 protein DIP1660 (69 aa).

2 stretches are compositionally biased toward basic and acidic residues: residues 1 to 19 (MSDF…KEAV) and 30 to 41 (DEGRADQTKADV). Positions 1-42 (MSDFENKIEELGGKAKEAVGEATENEQLADEGRADQTKADVK) are disordered.

The protein belongs to the UPF0337 (CsbD) family.

The protein is UPF0337 protein DIP1660 of Corynebacterium diphtheriae (strain ATCC 700971 / NCTC 13129 / Biotype gravis).